Consider the following 75-residue polypeptide: Large ribosomal subunit protein bL31 (75 aa).

The protein belongs to the bacterial ribosomal protein bL31 family. Type A subfamily. Part of the 50S ribosomal subunit.

In terms of biological role, binds the 23S rRNA. This chain is Large ribosomal subunit protein bL31, found in Chlorobium limicola (strain DSM 245 / NBRC 103803 / 6330).